The sequence spans 79 residues: Acyl carrier protein (79 aa).

Positions 2–77 (SEIGERVKKI…DAVKFLEKNA (76 aa)) constitute a Carrier domain. At S37 the chain carries O-(pantetheine 4'-phosphoryl)serine.

This sequence belongs to the acyl carrier protein (ACP) family. In terms of processing, 4'-phosphopantetheine is transferred from CoA to a specific serine of apo-ACP by AcpS. This modification is essential for activity because fatty acids are bound in thioester linkage to the sulfhydryl of the prosthetic group.

Its subcellular location is the cytoplasm. The protein operates within lipid metabolism; fatty acid biosynthesis. Carrier of the growing fatty acid chain in fatty acid biosynthesis. This is Acyl carrier protein from Rhodopseudomonas palustris (strain BisA53).